Consider the following 306-residue polypeptide: Ornithine carbamoyltransferase (306 aa).

Residues 53 to 56 (STRT), Q80, R104, and 131 to 134 (HPCQ) contribute to the carbamoyl phosphate site. Residues N162, D219, and 223–224 (SM) each bind L-ornithine. Carbamoyl phosphate is bound by residues 259-260 (CL) and R287.

Belongs to the aspartate/ornithine carbamoyltransferase superfamily. OTCase family.

It is found in the cytoplasm. The catalysed reaction is carbamoyl phosphate + L-ornithine = L-citrulline + phosphate + H(+). It participates in amino-acid biosynthesis; L-arginine biosynthesis; L-arginine from L-ornithine and carbamoyl phosphate: step 1/3. Its function is as follows. Reversibly catalyzes the transfer of the carbamoyl group from carbamoyl phosphate (CP) to the N(epsilon) atom of ornithine (ORN) to produce L-citrulline. The chain is Ornithine carbamoyltransferase from Psychrobacter sp. (strain PRwf-1).